An 839-amino-acid polypeptide reads, in one-letter code: DNA gyrase subunit A (839 aa).

Residues 46-510 (LPDARDGLKP…ISEDIDDEDL (465 aa)) form the Topo IIA-type catalytic domain. Tyr-134 acts as the O-(5'-phospho-DNA)-tyrosine intermediate in catalysis. Residues 537-543 (QHRGGVG) carry the GyrA-box motif.

The protein belongs to the type II topoisomerase GyrA/ParC subunit family. Heterotetramer, composed of two GyrA and two GyrB chains. In the heterotetramer, GyrA contains the active site tyrosine that forms a transient covalent intermediate with DNA, while GyrB binds cofactors and catalyzes ATP hydrolysis.

The protein localises to the cytoplasm. It catalyses the reaction ATP-dependent breakage, passage and rejoining of double-stranded DNA.. Its function is as follows. A type II topoisomerase that negatively supercoils closed circular double-stranded (ds) DNA in an ATP-dependent manner to modulate DNA topology and maintain chromosomes in an underwound state. Negative supercoiling favors strand separation, and DNA replication, transcription, recombination and repair, all of which involve strand separation. Also able to catalyze the interconversion of other topological isomers of dsDNA rings, including catenanes and knotted rings. Type II topoisomerases break and join 2 DNA strands simultaneously in an ATP-dependent manner. This is DNA gyrase subunit A from Mycoplasma pneumoniae (strain ATCC 29342 / M129 / Subtype 1) (Mycoplasmoides pneumoniae).